A 131-amino-acid polypeptide reads, in one-letter code: Holo-[acyl-carrier-protein] synthase (131 aa).

Mg(2+) contacts are provided by D8 and E59.

Belongs to the P-Pant transferase superfamily. AcpS family. Mg(2+) is required as a cofactor.

The protein resides in the cytoplasm. It carries out the reaction apo-[ACP] + CoA = holo-[ACP] + adenosine 3',5'-bisphosphate + H(+). Functionally, transfers the 4'-phosphopantetheine moiety from coenzyme A to a Ser of acyl-carrier-protein. This chain is Holo-[acyl-carrier-protein] synthase, found in Rickettsia conorii (strain ATCC VR-613 / Malish 7).